The sequence spans 181 residues: Cyclic AMP-dependent transcription factor ATF-3 (181 aa).

The tract at residues 76-97 (VTKAEVAPEEDERKKRRRERNK) is disordered. Residue lysine 78 forms a Glycyl lysine isopeptide (Lys-Gly) (interchain with G-Cter in SUMO2) linkage. One can recognise a bZIP domain in the interval 86–149 (DERKKRRRER…QHLIYMLNLH (64 aa)). Residues 88-110 (RKKRRRERNKIAAAKCRNKKKEK) are basic motif. Residues 114–142 (LQKESEKLESVNAELKAQIEELKNEKQHL) are leucine-zipper. Threonine 162 carries the phosphothreonine modification. A Glycyl lysine isopeptide (Lys-Gly) (interchain with G-Cter in SUMO2) cross-link involves residue lysine 175.

Belongs to the bZIP family. ATF subfamily. As to quaternary structure, binds DNA as a homodimer or a heterodimer. Interacts with KAT5; promoting KAT5 autoacetylation and KAT5 deubiquitination by USP7.

The protein localises to the nucleus. This protein binds the cAMP response element (CRE) (consensus: 5'-GTGACGT[AC][AG]-3'), a sequence present in many viral and cellular promoters. Represses transcription from promoters with ATF sites. It may repress transcription by stabilizing the binding of inhibitory cofactors at the promoter. The polypeptide is Cyclic AMP-dependent transcription factor ATF-3 (ATF3) (Bos taurus (Bovine)).